A 77-amino-acid chain; its full sequence is Small ribosomal subunit protein uS17 (77 aa).

This sequence belongs to the universal ribosomal protein uS17 family. As to quaternary structure, part of the 30S ribosomal subunit.

In terms of biological role, one of the primary rRNA binding proteins, it binds specifically to the 5'-end of 16S ribosomal RNA. This is Small ribosomal subunit protein uS17 from Rickettsia prowazekii (strain Madrid E).